Here is a 458-residue protein sequence, read N- to C-terminus: Opine oxidase subunit A (458 aa).

It to T-protein and to dimethylglycine dehydrogenase. As to quaternary structure, heterodimer of a subunit A and a subunit B.

The protein operates within opine metabolism; octopine degradation. Functionally, oxidative cleavage of octopine into L-arginine and pyruvate. This chain is Opine oxidase subunit A (ooxA), found in Rhizobium meliloti (strain 1021) (Ensifer meliloti).